We begin with the raw amino-acid sequence, 234 residues long: Uridylate kinase (234 aa).

9–12 is an ATP binding site; it reads KLSG. Residue G51 participates in UMP binding. ATP contacts are provided by G52 and R56. Residues D71 and 132–139 contribute to the UMP site; that span reads CGNPFFTT. The ATP site is built by T159, Y165, and D168.

This sequence belongs to the UMP kinase family. In terms of assembly, homohexamer.

Its subcellular location is the cytoplasm. The catalysed reaction is UMP + ATP = UDP + ADP. It participates in pyrimidine metabolism; CTP biosynthesis via de novo pathway; UDP from UMP (UMPK route): step 1/1. Inhibited by UTP. Functionally, catalyzes the reversible phosphorylation of UMP to UDP. This Prochlorococcus marinus (strain MIT 9215) protein is Uridylate kinase.